Reading from the N-terminus, the 212-residue chain is Calaxin (212 aa).

EF-hand domains follow at residues 65-100, 101-136, and 146-181; these read TDDM…FLRG, TLDE…SLLK, and GIKD…ENLL. The Ca(2+) site is built by Asp78, Asp80, Asp82, Cys84, Glu89, Asp114, Asn116, Asp118, Glu125, Asp159, Asp161, Asp163, Lys165, and Asp170.

Component of the outer dynein arm-docking complex along with ODAD1, ODAD2, ODAD3 and ODAD4.

The protein localises to the cytoplasm. It is found in the cytoskeleton. It localises to the cilium axoneme. The protein resides in the cell projection. Its subcellular location is the cilium. The protein localises to the flagellum. Component of the outer dynein arm-docking complex (ODA-DC) that mediates outer dynein arms (ODA) binding onto the doublet microtubule. Seems to regulate the assembly of both ODAs and their axonemal docking complex onto ciliary microtubules. Regulates ciliary and flagellar motility and is required for cilia-driven determination of body laterality. This is Calaxin (Clxn) from Mus musculus (Mouse).